The sequence spans 63 residues: Large ribosomal subunit protein bL28A (63 aa).

Belongs to the bacterial ribosomal protein bL28 family.

This chain is Large ribosomal subunit protein bL28A, found in Nocardia farcinica (strain IFM 10152).